A 67-amino-acid polypeptide reads, in one-letter code: MAVPKRKMSRANTRARRSQWKATAPTLVKSVENGRVSYRLPHQAELKTDAAGTPLFLEYKGRKVADA.

Residues 1–19 (MAVPKRKMSRANTRARRSQ) are compositionally biased toward basic residues. The segment at 1–21 (MAVPKRKMSRANTRARRSQWK) is disordered.

It belongs to the bacterial ribosomal protein bL32 family.

In Micrococcus luteus (strain ATCC 4698 / DSM 20030 / JCM 1464 / CCM 169 / CCUG 5858 / IAM 1056 / NBRC 3333 / NCIMB 9278 / NCTC 2665 / VKM Ac-2230) (Micrococcus lysodeikticus), this protein is Large ribosomal subunit protein bL32.